A 242-amino-acid chain; its full sequence is Uridylate kinase (242 aa).

An ATP-binding site is contributed by lysine 15 to glycine 18. Residues glycine 23–glycine 28 form an involved in allosteric activation by GTP region. Residue glycine 57 participates in UMP binding. Glycine 58 and arginine 62 together coordinate ATP. UMP contacts are provided by residues aspartate 77 and threonine 138–threonine 145. Residues threonine 165, tyrosine 171, and aspartate 174 each coordinate ATP.

Belongs to the UMP kinase family. In terms of assembly, homohexamer.

The protein localises to the cytoplasm. It catalyses the reaction UMP + ATP = UDP + ADP. It participates in pyrimidine metabolism; CTP biosynthesis via de novo pathway; UDP from UMP (UMPK route): step 1/1. Allosterically activated by GTP. Inhibited by UTP. Catalyzes the reversible phosphorylation of UMP to UDP. In Shewanella sp. (strain ANA-3), this protein is Uridylate kinase.